We begin with the raw amino-acid sequence, 983 residues long: GPI ethanolamine phosphate transferase 2, catalytic subunit (983 aa).

The Lumenal portion of the chain corresponds to 1–431 (MRLGSGTFAT…SLSAQVAQYD (431 aa)). Asparagine 194 carries an N-linked (GlcNAc...) asparagine glycan. 12 helical membrane passes run 432–452 (IYSM…LLLS), 471–491 (GFSL…VIVC), 506–526 (LAAG…VSVL), 552–572 (LLIL…SFVE), 699–719 (VLAA…CSPV), 721–741 (KAAL…IGSV), 752–772 (ISKG…ILFT), 789–809 (LKTV…ALLF), 812–832 (HNLP…KFIW), 879–899 (VEIP…VLWA), 919–939 (ACFC…VLVT), and 955–975 (LLYE…FTAM).

It belongs to the PIGG/PIGN/PIGO family. PIGG subfamily. Part of the ethanolamine phosphate transferase 2 complex composed by PIGG and PIGF. PIGF is required to stabilize it. Competes with PIGO for the binding of PIGF.

Its subcellular location is the endoplasmic reticulum membrane. It participates in glycolipid biosynthesis; glycosylphosphatidylinositol-anchor biosynthesis. Functionally, catalytic subunit of the ethanolamine phosphate transferase 2 complex that transfers an ethanolamine phosphate (EtNP) from a phosphatidylethanolamine (PE) to the 6-OH position of the second alpha-1,6-linked mannose of a 6-PEtn-alpha-D-Man-(1-&gt;2)-alpha-D-Man-(1-&gt;6)-2-PEtn-alpha-D-Man-(1-&gt;4)-alpha-D-GlcN-(1-&gt;6)-(1-radyl,2-acyl-sn-glycero-3-phospho)-2-acyl-inositol (also termed H7) intermediate to generate a 6-PEtn-alpha-D-Man-(1-&gt;2)-6-PEtn-alpha-D-Man-(1-&gt;6)-2-PEtn-alpha-D-Man-(1-&gt;4)-alpha-D-GlcN-(1-&gt;6)-(1-radyl,2-acyl-sn-glycero-3-phospho)-2-acyl-inositol (also termed H8) and participates in the eleventh step of the glycosylphosphatidylinositol-anchor biosynthesis. The polypeptide is GPI ethanolamine phosphate transferase 2, catalytic subunit (Homo sapiens (Human)).